Here is a 265-residue protein sequence, read N- to C-terminus: Protein Rv2993c (265 aa).

Residues Glu-114, Glu-116, and Asp-145 each coordinate a divalent metal cation.

It in the C-terminal section; belongs to the FAH family. A divalent metal cation is required as a cofactor.

The polypeptide is Protein Rv2993c (Mycobacterium tuberculosis (strain ATCC 25618 / H37Rv)).